The primary structure comprises 199 residues: NAD(P)H dehydrogenase (quinone) (199 aa).

Residues 4–190 (VLVLYYSAYG…DGARYQGRKI (187 aa)) enclose the Flavodoxin-like domain. FMN contacts are provided by residues 10 to 15 (SAYGHI) and 78 to 80 (TRF). Y12 lines the NAD(+) pocket. Residue W98 participates in substrate binding. Residues 113–119 (STATQHG) and H134 contribute to the FMN site.

The protein belongs to the WrbA family. FMN is required as a cofactor.

It catalyses the reaction a quinone + NADH + H(+) = a quinol + NAD(+). The catalysed reaction is a quinone + NADPH + H(+) = a quinol + NADP(+). The polypeptide is NAD(P)H dehydrogenase (quinone) (Xanthobacter autotrophicus (strain ATCC BAA-1158 / Py2)).